The sequence spans 298 residues: S-adenosyl-L-methionine-dependent methyltransferase dpfgK (298 aa).

Belongs to the methyltransferase superfamily.

The protein operates within secondary metabolite biosynthesis; terpenoid biosynthesis. Its function is as follows. S-adenosyl-L-methionine-dependent methyltransferase; part of the gene cluster that mediates the biosynthesis of diterpenoid pyrones. The first step of the pathway is the synthesis of the alpha-pyrone moiety by the polyketide synthase dpfgA via condensation of one acetyl-CoA starter unit with 3 malonyl-CoA units and 2 methylations. The alpha-pyrone is then combined with geranylgeranyl pyrophosphate (GGPP) formed by the GGPP synthase dpfgD through the action of the prenyltransferase dpfgC to yield a linear alpha-pyrone diterpenoid. Subsequent steps in the diterpenoid pyrone biosynthetic pathway involve the decalin core formation, which is initiated by the epoxidation of the C10-C11 olefin by the FAD-dependent oxidoreductase dpfgE, and is followed by a cyclization cascade catalyzed by the terpene cyclase dpfgB. The short chain dehydrogenase/reductase dpfgG then oxidizes the 8S hydroxy group to a ketone and the short chain dehydrogenase/reductase dpfgH reduces the ketone to the 8R hydroxy group to yield higginsianin B. Higginsianin B is further methylated by the methyltransferase dpfgI to produce the intermediate named FDDP B. The cytochrome P450 monooxygenase dfgpJ then catalyzes a three-step oxidation at C-27 to generate a carboxylic acid as well as C-26 hydroxylation. Finally, methyltransferase dpfgK methylates the carboxylic acid generated by dpfgJ, yielding the final diterpenoid pyrones from the pathway which were named FDDP D and FDDP E. The chain is S-adenosyl-L-methionine-dependent methyltransferase dpfgK from Gibberella zeae (strain ATCC MYA-4620 / CBS 123657 / FGSC 9075 / NRRL 31084 / PH-1) (Wheat head blight fungus).